Reading from the N-terminus, the 239-residue chain is 1-(5-phosphoribosyl)-5-[(5-phosphoribosylamino)methylideneamino] imidazole-4-carboxamide isomerase (239 aa).

The active-site Proton acceptor is the Asp8. Asp129 serves as the catalytic Proton donor.

It belongs to the HisA/HisF family.

The protein resides in the cytoplasm. It carries out the reaction 1-(5-phospho-beta-D-ribosyl)-5-[(5-phospho-beta-D-ribosylamino)methylideneamino]imidazole-4-carboxamide = 5-[(5-phospho-1-deoxy-D-ribulos-1-ylimino)methylamino]-1-(5-phospho-beta-D-ribosyl)imidazole-4-carboxamide. It functions in the pathway amino-acid biosynthesis; L-histidine biosynthesis; L-histidine from 5-phospho-alpha-D-ribose 1-diphosphate: step 4/9. This Bacillus cereus (strain AH820) protein is 1-(5-phosphoribosyl)-5-[(5-phosphoribosylamino)methylideneamino] imidazole-4-carboxamide isomerase.